We begin with the raw amino-acid sequence, 2014 residues long: MANRSLKKVIETSSNNGHDLLTWITTNLEKLICLKEVNDNEIQEVKEIHTQLDEFVRYISVLENTDDLELHSVFISLSQLYTISIWRLKDEYPGVVFDSAAFLTNVLCEEDVSIDDGDTDPNQKKKKKKSSTKKKKYIYSPAKDIACTILVQLFENFGSSISSLIPLLFNAIFKNLKKIMEKSKYYHATFMTTLLQLFNAILRNSNNDDKILDPATYAKFSKLSKTVFDSISTDEKDFSVTFVSVLIECWTAHFKQTNFIREHSHDIIETIYSRFTEGEIGVYGFANDETRIFTAKSLAEILFDYYFSKNILTLQEVWSIYVKIFLNCDTRDVESGCFESIIHLINLNLLADNTFLSNSKYLDIVLSLSGVFSSYEVNNRSMNTLSRYLRYFQHMHEVILPHLNDSAKTQMLYYILGCSDTYQSSSKSDSASNFKYSIDAKPETQWLTLLQLDFTYVLISDLGSTFTTEENTVKEIRDKLVDLATCEIFTIRVHTVEILKVFLNNCPEYLSETIENSLRALSTDFKSTGKFIFHKNHGHAFIIANLIKGAESDYISYELIMRITVFSTSFIKNNTTSTSSNLYFKGLLCWILLIGLMNYKDEQYLKLQIPQLFLFWKVLLTHTYTYHDEDELYKNLEIRNHALTCLLTYLSNTTIDKEMAKQVSYLLTKCSNFNHSIDLKSKNIDNALLHNENRILQVYLKLEKYINSDFNSSLLILIVKNFSDPNLYTESSSSVLGSLKDIGNRKVSNKDDMESNIVLESSINTLLRQNNGFAFGLSSKITGDRIVNLSMSSAYKYDESISGSWPSKDYNWYNIFEVEVSKPISPILSLDSLILLYGSGSYSQIDRYAPQVTTSLIDSSMELFSSVFPFLNSKIQYSIMETLNLSMFSKMTTPLRSVAVAANVCSALHNALRIMQENNLELDYSVGQLIIESIKKIQFFNDIFLTKIKADCVGLLTAAIARTLGDEERQKFLTEQSRIFIKNVADMDEPYLRMFHVLSLATIFKYNSQYANFEEYFDVIFALMRDPHPVVHSWSLKAMHILLEKHLVIDLKTAALLLSSMEELLVQDKYGIYGRSTLRCNYNRDFNSHVAIGEISRTLTETVGPNFLELNTKVLDSFRNITLSMLISNNILNSITSIKMFENIATFKMKNILNYEIFILASKSIIKSSIVTGIGSSYFDTTFTGSNELISRTSSLKGAFENFDLLTLLYKLQMEEFFMKEMENLSWRYLALFPNSGSVKNYFTEWILHTFKRDNHWFDKLYSIFNMSLGRLFQSYNRDVSALLEVNGLKKSSEKEIKGEEEESIANVNQLTDTDAGGLDSENLQWKSRQIILNLILMLCLESEKYENLLLALSNKIADLIKISFRGSTVRNEGMKLTGLHILNFVLKNYSTMRDPQVPGSSILEQQEAQITSALMPAFSKGSSPTVMSFAITVAAEVLASNIMPPDKLGRISQLLIDLLGNFKDPNSGIRIGEAIIVTPKAKRKIELAVLDAWAEVVQRSITSSNDALFSFTRKYWSILVPLWIISLREYMMIKYNDNDSTVQVKNDSKENSLIEPRSTKIELYEPVWLNFVEALGCTLDSDVQVILASLNDEELEYFLFILFSQCLEAIVKNIDDHSVKMQVLPALHNVLKSNLCIKSIFEDDIITEVVEIMDRLISTGDSKEEFLLVDIISDLIIGYSKCNATPETFLQDIDKLYELLRLLMTIISERLPFIKYNVLTSEEDDNEIKISPTDISLLKKTFIAFESNISNFDNMFKVDLYSCLLFIIGKIYECSHREVIIPIILPLFKALVKALTESEDEKNIVLLEIFYGSIKDVIYHKLDSKNKVATILILLSNGYSKLSFQELNQCANILSEALNNPATQPIALQGFKRIISNIFKYPLLQYFMKLVIKRFFQDIQTNDSLSQASIKTKLIIQFSEEVIKQDHQKASLSIALCLSFFAAYHSAYTEKIDNEVASGIVALAKLDKNSFKEAISSTISPQQKAIIGSVMEAYVKSQSLGSVEEAFQLKSFD.

As to quaternary structure, interacts with the clathrin-associated adapter complex AP-1. Interacts directly with LAA2.

The protein resides in the golgi apparatus. It localises to the cytoplasmic vesicle. It is found in the clathrin-coated vesicle. Functionally, involved in localization of clathrin adapter protein complex-1 (AP-1) and subsequent AP-1-mediated clathrin-coated vesicle cargo loading. In complex with LAA2, cooperates with the small GTPase ARF1 and the phosphatidyl-inositol-4-phosphate (PI4P) synthesis to confer temporal specificity to AP-1 recruitment. The chain is AP-1 accessory protein LAA1 from Saccharomyces cerevisiae (strain ATCC 204508 / S288c) (Baker's yeast).